Reading from the N-terminus, the 247-residue chain is UDP-2,3-diacylglucosamine hydrolase (247 aa).

Mn(2+) contacts are provided by Asp-8, His-10, Asp-41, Asn-79, and His-115. 79–80 (NH) is a binding site for substrate. Asp-123, Lys-165, Lys-168, and His-196 together coordinate substrate. Residues His-196 and His-198 each contribute to the Mn(2+) site.

The protein belongs to the LpxH family. It depends on Mn(2+) as a cofactor.

The protein localises to the cell inner membrane. The enzyme catalyses UDP-2-N,3-O-bis[(3R)-3-hydroxytetradecanoyl]-alpha-D-glucosamine + H2O = 2-N,3-O-bis[(3R)-3-hydroxytetradecanoyl]-alpha-D-glucosaminyl 1-phosphate + UMP + 2 H(+). It functions in the pathway glycolipid biosynthesis; lipid IV(A) biosynthesis; lipid IV(A) from (3R)-3-hydroxytetradecanoyl-[acyl-carrier-protein] and UDP-N-acetyl-alpha-D-glucosamine: step 4/6. Functionally, hydrolyzes the pyrophosphate bond of UDP-2,3-diacylglucosamine to yield 2,3-diacylglucosamine 1-phosphate (lipid X) and UMP by catalyzing the attack of water at the alpha-P atom. Involved in the biosynthesis of lipid A, a phosphorylated glycolipid that anchors the lipopolysaccharide to the outer membrane of the cell. In Blochmanniella floridana, this protein is UDP-2,3-diacylglucosamine hydrolase.